The primary structure comprises 428 residues: uncharacterized protein (428 aa).

10 helical membrane passes run 26-46 (VALT…DDVF), 51-71 (AGID…VSVL), 90-110 (AAPL…SALL), 135-155 (TPFL…TLVG), 177-197 (MAPA…WLLG), 223-243 (LLIK…AHPV), 278-298 (TLLF…TGVV), 314-334 (LLTV…IDNI), 359-379 (TFWW…AVAA), and 407-427 (VVTA…YFVF).

It belongs to the CitM (TC 2.A.11) transporter family.

Its subcellular location is the cell membrane. This is an uncharacterized protein from Mycobacterium tuberculosis (strain CDC 1551 / Oshkosh).